A 146-amino-acid polypeptide reads, in one-letter code: Large ribosomal subunit protein bL17 (146 aa).

Residues 124–134 are compositionally biased toward low complexity; sequence EASRATRAAAS. The interval 124-146 is disordered; sequence EASRATRAAASKKAEEEAASEAE.

This sequence belongs to the bacterial ribosomal protein bL17 family. Part of the 50S ribosomal subunit. Contacts protein L32.

The chain is Large ribosomal subunit protein bL17 from Corynebacterium kroppenstedtii (strain DSM 44385 / JCM 11950 / CIP 105744 / CCUG 35717).